A 156-amino-acid chain; its full sequence is MNINATLIGQSVAFLIFVLFCMKFVWPPVIAALHERQKKIADGLDAASRAARDLELAQEKAGQQLREAKAQAAEIIEQAKKRGNQIVEEAVEKARIDADRVKVQAQAEIEQELNSVKDKLRAQVGLLAVGGAEKILGATIDQNAHAELVNQLAAEI.

Residues 12–32 traverse the membrane as a helical segment; the sequence is VAFLIFVLFCMKFVWPPVIAA.

The protein belongs to the ATPase B chain family. As to quaternary structure, F-type ATPases have 2 components, F(1) - the catalytic core - and F(0) - the membrane proton channel. F(1) has five subunits: alpha(3), beta(3), gamma(1), delta(1), epsilon(1). F(0) has three main subunits: a(1), b(2) and c(10-14). The alpha and beta chains form an alternating ring which encloses part of the gamma chain. F(1) is attached to F(0) by a central stalk formed by the gamma and epsilon chains, while a peripheral stalk is formed by the delta and b chains.

The protein localises to the cell inner membrane. F(1)F(0) ATP synthase produces ATP from ADP in the presence of a proton or sodium gradient. F-type ATPases consist of two structural domains, F(1) containing the extramembraneous catalytic core and F(0) containing the membrane proton channel, linked together by a central stalk and a peripheral stalk. During catalysis, ATP synthesis in the catalytic domain of F(1) is coupled via a rotary mechanism of the central stalk subunits to proton translocation. Functionally, component of the F(0) channel, it forms part of the peripheral stalk, linking F(1) to F(0). In Pseudomonas fluorescens (strain Pf0-1), this protein is ATP synthase subunit b.